We begin with the raw amino-acid sequence, 446 residues long: Tubulin beta-5 chain (446 aa).

Residues methionine 1 to isoleucine 4 carry the MREI motif motif. Positions 11, 69, 138, 142, 143, 144, 204, and 226 each coordinate GTP. Residue glutamate 69 coordinates Mg(2+). Glutamate 438 carries the post-translational modification 5-glutamyl polyglutamate.

It belongs to the tubulin family. As to quaternary structure, dimer of alpha and beta chains. A typical microtubule is a hollow water-filled tube with an outer diameter of 25 nm and an inner diameter of 15 nM. Alpha-beta heterodimers associate head-to-tail to form protofilaments running lengthwise along the microtubule wall with the beta-tubulin subunit facing the microtubule plus end conferring a structural polarity. Microtubules usually have 13 protofilaments but different protofilament numbers can be found in some organisms and specialized cells. Mg(2+) is required as a cofactor. Post-translationally, some glutamate residues at the C-terminus are polyglycylated, resulting in polyglycine chains on the gamma-carboxyl group. Glycylation is mainly limited to tubulin incorporated into axonemes (cilia and flagella) whereas glutamylation is prevalent in neuronal cells, centrioles, axonemes, and the mitotic spindle. Both modifications can coexist on the same protein on adjacent residues, and lowering polyglycylation levels increases polyglutamylation, and reciprocally. The precise function of polyglycylation is still unclear. In terms of processing, some glutamate residues at the C-terminus are polyglutamylated, resulting in polyglutamate chains on the gamma-carboxyl group. Polyglutamylation plays a key role in microtubule severing by spastin (SPAST). SPAST preferentially recognizes and acts on microtubules decorated with short polyglutamate tails: severing activity by SPAST increases as the number of glutamates per tubulin rises from one to eight, but decreases beyond this glutamylation threshold.

Its subcellular location is the cytoplasm. It is found in the cytoskeleton. Tubulin is the major constituent of microtubules, a cylinder consisting of laterally associated linear protofilaments composed of alpha- and beta-tubulin heterodimers. Microtubules grow by the addition of GTP-tubulin dimers to the microtubule end, where a stabilizing cap forms. Below the cap, tubulin dimers are in GDP-bound state, owing to GTPase activity of alpha-tubulin. In Gallus gallus (Chicken), this protein is Tubulin beta-5 chain.